The chain runs to 678 residues: ERAD-associated E3 ubiquitin-protein ligase component HRD3A (678 aa).

Residues 1 to 25 (MRILSYGIVILSLLVFSFIEFGVHA) form the signal peptide. Residues 40–71 (GGDDNGVGESSDFDEFGESEPKSEEELDPGSW) form a disordered region. 8 Sel1-like repeats span residues 124–159 (PHAQ…AGGN), 242–277 (ANAM…VDKG), 279–313 (PRSM…AKEG), 317–349 (AFNG…AVDN), 353–386 (SGHY…ANAG), 388–422 (PKAF…AERG), 506–537 (AALL…AKSQ), and 540–568 (AQAM…RYYD). 2 N-linked (GlcNAc...) asparagine glycosylation sites follow: asparagine 298 and asparagine 335. A helical transmembrane segment spans residues 620–640 (VVFEEGNATILTLFVCLITIL).

This sequence belongs to the sel-1 family. In terms of assembly, interacts with OS9.

It is found in the endoplasmic reticulum membrane. In terms of biological role, component of the endoplasmic reticulum (ER) quality control system called ER-associated degradation (ERAD) and involved in ubiquitin-dependent degradation of misfolded endoplasmic reticulum proteins. Functions as an ERAD substrate-recruiting factor that recognizes misfolded proteins for the HRD1 E3 ubiquitin ligase complex. Targets the misfolded LRR receptor kinase BRI1. The sequence is that of ERAD-associated E3 ubiquitin-protein ligase component HRD3A from Arabidopsis thaliana (Mouse-ear cress).